The chain runs to 128 residues: Azurin (128 aa).

The 128-residue stretch at 1–128 (AECKVDVDST…SMMKGAVVLK (128 aa)) folds into the Plastocyanin-like domain. A disulfide bridge links Cys-3 with Cys-26. His-46, Cys-112, His-117, and Met-121 together coordinate Cu cation.

The protein localises to the periplasm. In terms of biological role, transfers electrons from cytochrome c551 to cytochrome oxidase. This is Azurin from Pseudomonas chlororaphis (Pseudomonas aureofaciens).